We begin with the raw amino-acid sequence, 82 residues long: Small ribosomal subunit protein bS16 (82 aa).

The protein belongs to the bacterial ribosomal protein bS16 family.

The chain is Small ribosomal subunit protein bS16 from Actinobacillus succinogenes (strain ATCC 55618 / DSM 22257 / CCUG 43843 / 130Z).